The sequence spans 339 residues: Adenylosuccinate synthetase (339 aa).

GTP is bound by residues 12 to 18 and 42 to 44; these read GDEGKGS and GHS. Asp-13 acts as the Proton acceptor in catalysis. Mg(2+)-binding residues include Asp-13 and Gly-42. Residues 13-16, 40-43, Thr-127, Arg-141, Gln-179, Thr-194, and Arg-256 each bind IMP; these read DEGK and NAGH. His-43 acts as the Proton donor in catalysis. 252 to 258 lines the substrate pocket; the sequence is TVTGRRR. Residues Arg-258, 284 to 286, and 324 to 326 each bind GTP; these read MLD and KTG.

The protein belongs to the adenylosuccinate synthetase family. As to quaternary structure, homodimer. The cofactor is Mg(2+).

It localises to the cytoplasm. It carries out the reaction IMP + L-aspartate + GTP = N(6)-(1,2-dicarboxyethyl)-AMP + GDP + phosphate + 2 H(+). Its pathway is purine metabolism; AMP biosynthesis via de novo pathway; AMP from IMP: step 1/2. In terms of biological role, plays an important role in the de novo pathway of purine nucleotide biosynthesis. Catalyzes the first committed step in the biosynthesis of AMP from IMP. The sequence is that of Adenylosuccinate synthetase from Pyrococcus horikoshii (strain ATCC 700860 / DSM 12428 / JCM 9974 / NBRC 100139 / OT-3).